Consider the following 146-residue polypeptide: Hemoglobin subunit beta (146 aa).

The region spanning 2–146 (HWSAEEKQLI…VAHSLARVYH (145 aa)) is the Globin domain. The heme b site is built by H63 and H92.

This sequence belongs to the globin family. As to quaternary structure, heterotetramer of two alpha chains and two beta chains. Red blood cells.

In terms of biological role, involved in oxygen transport from the lung to the various peripheral tissues. This is Hemoglobin subunit beta (HBB) from Microcephalophis gracilis (Graceful small-headed sea snake).